Consider the following 721-residue polypeptide: K(+)-insensitive pyrophosphate-energized proton pump (721 aa).

5 consecutive transmembrane segments (helical) span residues 8–28 (LLGV…AVWV), 57–77 (YRTL…AIDM), 82–102 (FGLT…AGYL), 136–156 (VMGL…YLVF), and 168–188 (LVAL…GGGI). Substrate is bound at residue lysine 191. Mg(2+) is bound by residues aspartate 194, aspartate 198, asparagine 221, and aspartate 224. Helical transmembrane passes span 247-267 (AIFL…IILF), 294-314 (ISLA…IGAF), 323-343 (ALAL…IVKI), 374-394 (YGVG…VLGI), and 416-436 (AGIF…GIII). A Mg(2+)-binding site is contributed by aspartate 446. Transmembrane regions (helical) follow at residues 483–503 (AIAS…FEIV), 527–547 (LINA…YFFS), 599–619 (FLIP…LLGW), and 621–641 (ALAG…LLMA). Residues aspartate 648, aspartate 672, and aspartate 676 each coordinate Ca(2+). Lysine 679 provides a ligand contact to substrate. Residues 698–718 (VVFTYVIVSTNIALGIWPSGL) form a helical membrane-spanning segment.

Belongs to the H(+)-translocating pyrophosphatase (TC 3.A.10) family. K(+)-insensitive subfamily. As to quaternary structure, homodimer. It depends on Mg(2+) as a cofactor.

It localises to the cell membrane. The enzyme catalyses diphosphate + H2O + H(+)(in) = 2 phosphate + 2 H(+)(out). Its function is as follows. Proton pump that utilizes the energy of pyrophosphate hydrolysis as the driving force for proton movement across the membrane. Generates a proton motive force. The chain is K(+)-insensitive pyrophosphate-energized proton pump from Pyrobaculum aerophilum (strain ATCC 51768 / DSM 7523 / JCM 9630 / CIP 104966 / NBRC 100827 / IM2).